Here is an 84-residue protein sequence, read N- to C-terminus: Small ribosomal subunit protein uS17 (84 aa).

Belongs to the universal ribosomal protein uS17 family. As to quaternary structure, part of the 30S ribosomal subunit.

Its function is as follows. One of the primary rRNA binding proteins, it binds specifically to the 5'-end of 16S ribosomal RNA. The protein is Small ribosomal subunit protein uS17 of Borrelia garinii subsp. bavariensis (strain ATCC BAA-2496 / DSM 23469 / PBi) (Borreliella bavariensis).